Consider the following 209-residue polypeptide: Dual specificity phosphatase 29 (209 aa).

Positions 45–193 (HVNEVWPNLY…LRELDIKLAL (149 aa)) constitute a Tyrosine-protein phosphatase domain. 137–144 (NCAMGRSR) is a binding site for substrate. Catalysis depends on Cys138, which acts as the Phosphocysteine intermediate.

It belongs to the protein-tyrosine phosphatase family. Non-receptor class dual specificity subfamily.

It is found in the cytoplasm. The protein resides in the nucleus. The enzyme catalyses O-phospho-L-tyrosyl-[protein] + H2O = L-tyrosyl-[protein] + phosphate. It catalyses the reaction O-phospho-L-seryl-[protein] + H2O = L-seryl-[protein] + phosphate. It carries out the reaction O-phospho-L-threonyl-[protein] + H2O = L-threonyl-[protein] + phosphate. In terms of biological role, dual specificity phosphatase able to dephosphorylate phosphotyrosine, phosphoserine and phosphothreonine residues, with a preference for phosphotyrosine as a substrate. Its function is as follows. Dual specificity phosphatase able to dephosphorylate phosphotyrosine, phosphoserine and phosphothreonine residues within the same substrate, with a preference for phosphotyrosine as a substrate. Involved in the modulation of AMPK and MAPK1/2 signaling pathway. The chain is Dual specificity phosphatase 29 (dusp29) from Xenopus laevis (African clawed frog).